The primary structure comprises 634 residues: Glutathione S-transferase C-terminal domain-containing protein (634 aa).

Residues 131–333 (LGFKKTCLKA…QEVPKVKTAA (203 aa)) form the GST C-terminal domain. Residues 189-233 (RVHNDDKLRRQKLKQQKAAGSEPPSGKGKAKSKASAQKTPKDLAA) form a disordered region. Over residues 204-226 (QKAAGSEPPSGKGKAKSKASAQK) the composition is skewed to low complexity.

This sequence belongs to the GSTCD family.

It is found in the cytoplasm. The sequence is that of Glutathione S-transferase C-terminal domain-containing protein (Gstcd) from Mus musculus (Mouse).